We begin with the raw amino-acid sequence, 74 residues long: Conotoxin MiK41 (74 aa).

A signal peptide spans 1 to 22 (MKLTCVLIITVLFLTACQLTTA). Positions 23 to 45 (VTYSRGEHKHRALMSTGTNYRLP) are excised as a propeptide. 3 cysteine pairs are disulfide-bonded: Cys48–Cys62, Cys55–Cys66, and Cys61–Cys73.

Belongs to the conotoxin O1 superfamily. In terms of tissue distribution, expressed by the venom duct.

The protein resides in the secreted. This chain is Conotoxin MiK41, found in Conus miles (Soldier cone).